We begin with the raw amino-acid sequence, 122 residues long: S-adenosylmethionine decarboxylase proenzyme (122 aa).

Residue S69 is the Schiff-base intermediate with substrate; via pyruvic acid of the active site. Position 69 is a pyruvic acid (Ser); by autocatalysis (S69). H74 acts as the Proton acceptor; for processing activity in catalysis. The active-site Proton donor; for catalytic activity is C89.

It belongs to the prokaryotic AdoMetDC family. Type 1 subfamily. In terms of assembly, heterotetramer of two alpha and two beta chains arranged as a dimer of alpha/beta heterodimers. It depends on pyruvate as a cofactor. Post-translationally, is synthesized initially as an inactive proenzyme. Formation of the active enzyme involves a self-maturation process in which the active site pyruvoyl group is generated from an internal serine residue via an autocatalytic post-translational modification. Two non-identical subunits are generated from the proenzyme in this reaction, and the pyruvate is formed at the N-terminus of the alpha chain, which is derived from the carboxyl end of the proenzyme. The post-translation cleavage follows an unusual pathway, termed non-hydrolytic serinolysis, in which the side chain hydroxyl group of the serine supplies its oxygen atom to form the C-terminus of the beta chain, while the remainder of the serine residue undergoes an oxidative deamination to produce ammonia and the pyruvoyl group blocking the N-terminus of the alpha chain.

It catalyses the reaction S-adenosyl-L-methionine + H(+) = S-adenosyl 3-(methylsulfanyl)propylamine + CO2. The protein operates within amine and polyamine biosynthesis; S-adenosylmethioninamine biosynthesis; S-adenosylmethioninamine from S-adenosyl-L-methionine: step 1/1. Functionally, catalyzes the decarboxylation of S-adenosylmethionine to S-adenosylmethioninamine (dcAdoMet), the propylamine donor required for the synthesis of the polyamines spermine and spermidine from the diamine putrescine. This Saccharolobus islandicus (strain L.S.2.15 / Lassen #1) (Sulfolobus islandicus) protein is S-adenosylmethionine decarboxylase proenzyme.